The chain runs to 3625 residues: Spectinabilin polyketide synthase system protein NorA' (3625 aa).

One can recognise a Ketosynthase family 3 (KS3) 1 domain in the interval 33 to 459 (REPVAVVSMA…GTNAHVILEQ (427 aa)). Catalysis depends on for beta-ketoacyl synthase 1 activity residues C206, H341, and H381. Residues 564-881 (LVFPGQGSQW…SLGELFAGGR (318 aa)) form the Malonyl-CoA:ACP transacylase (MAT) 1 domain. An N-terminal hotdog fold 1 region spans residues 930–1054 (HPWWGAVTEL…GTLTRTARPA (125 aa)). The PKS/mFAS DH 1 domain occupies 930 to 1200 (HPWWGAVTEL…VRPLTPGSGA (271 aa)). H962 acts as the Proton acceptor; for dehydratase activity 1 in catalysis. The tract at residues 1066–1200 (ADPLPVDRIY…VRPLTPGSGA (135 aa)) is C-terminal hotdog fold 1. The active-site Proton donor; for dehydratase activity 1 is D1125. One can recognise a Ketoreductase (KR) 1 domain in the interval 1443–1620 (GTVLVTGAAG…LSLAWGLWAE (178 aa)). A Carrier 1 domain is found at 1722–1797 (GAVLETVRAQ…SLAAHLLGRL (76 aa)). S1757 is subject to O-(pantetheine 4'-phosphoryl)serine. One can recognise a Ketosynthase family 3 (KS3) 2 domain in the interval 1815 to 2231 (DEPIAIIGMA…GTNAHVVLEQ (417 aa)). Residues C1978, H2113, and H2153 each act as for beta-ketoacyl synthase 2 activity in the active site. One can recognise a Malonyl-CoA:ACP transacylase (MAT) 2 domain in the interval 2336-2656 (VFVFPGQGAQ…VAEAHTRGIA (321 aa)). Residues 2704–2829 (HPLLGARMEL…GLLSEEEPAT (126 aa)) form an N-terminal hotdog fold 2 region. The PKS/mFAS DH 2 domain occupies 2704-2981 (HPLLGARMEL…ARPVPAGQLR (278 aa)). The active-site Proton acceptor; for dehydratase activity 2 is the H2736. The C-terminal hotdog fold 2 stretch occupies residues 2842 to 2981 (AEPIELVGFY…ARPVPAGQLR (140 aa)). The active-site Proton donor; for dehydratase activity 2 is D2903. The Ketoreductase (KR) 2 domain occupies 3182–3361 (GTVLITGASG…QSLAWGLWSE (180 aa)). The Carrier 2 domain occupies 3462–3537 (RQLTDLVRAQ…ALAGHLSTRL (76 aa)). S3497 carries the post-translational modification O-(pantetheine 4'-phosphoryl)serine.

As to quaternary structure, the spectinabilin polyketide synthase complex is composed of 4 proteins, NorA, NorA', NorB and NorC. The complex comprises 6 modules with a total of 28 catalytic domains catalyzing 7 chain elongations. NorA comprises one module, NorA' two modules, NorB one module and NorC two modules. Requires pantetheine 4'-phosphate as cofactor.

The catalysed reaction is 4-nitrobenzoyl-CoA + 6 (S)-methylmalonyl-CoA + malonyl-CoA + 6 NADPH + 12 H(+) = demethyldeoxyspectinabilin + 7 CO2 + 6 NADP(+) + 8 CoA + 5 H2O. Its pathway is antibiotic biosynthesis. The protein operates within polyketide biosynthesis. Functionally, component of a type I modular polyketide synthase (PKS) that generates the backbone of the antibiotic spectinabilin (also known as neoaureothin), a nitroaryl-substituted polyketide metabolite. This PKS system accepts the unusual starter unit 4-nitrobenzoyl-CoA and extends it by 6 molecules of (S)-methylmalonyl-CoA and a single molecule of malonyl-CoA. The chain is Spectinabilin polyketide synthase system protein NorA' from Streptomyces orinoci (Streptoverticillium orinoci).